Consider the following 187-residue polypeptide: Ribosome-recycling factor (187 aa).

The protein belongs to the RRF family.

It is found in the cytoplasm. In terms of biological role, responsible for the release of ribosomes from messenger RNA at the termination of protein biosynthesis. May increase the efficiency of translation by recycling ribosomes from one round of translation to another. This is Ribosome-recycling factor from Nitrobacter winogradskyi (strain ATCC 25391 / DSM 10237 / CIP 104748 / NCIMB 11846 / Nb-255).